The chain runs to 177 residues: Phycocyanin-645 beta chain (177 aa).

Mesobiliverdin is bound at residue Tyr-18. 3 residues coordinate (2R,3E)-phycocyanobilin: Lys-28, Asn-35, and Asp-39. 15,16-dihydrobiliverdin is bound by residues Cys-50, Asp-54, and Cys-61. Residues Arg-77, Cys-82, Arg-84, and Asp-85 each coordinate (2R,3E)-phycocyanobilin. Gln-148 is a 15,16-dihydrobiliverdin binding site. The (2R,3E)-phycocyanobilin site is built by Pro-154, Gly-156, and Cys-158.

It belongs to the phycobiliprotein family. In terms of assembly, heterotetramer of 2 different alpha chains and 2 identical beta chains which form 2 alpha-beta heterodimers within the heterotetramer. Contains two phycocyanobilin chromophores, one mesobiliverdin chromophore and one 15,16-dihydrobiliverdin chromophore with binding mediated by both the alpha and beta subunits.

It localises to the plastid. The protein resides in the chloroplast thylakoid membrane. Light-harvesting photosynthetic tetrapyrrole chromophore-protein from the phycobiliprotein complex. The polypeptide is Phycocyanin-645 beta chain (Chroomonas sp).